Reading from the N-terminus, the 469-residue chain is Adenosylhomocysteinase (469 aa).

3 residues coordinate substrate: Thr58, Asp133, and Glu195. Position 196–198 (196–198 (TTT)) interacts with NAD(+). Substrate-binding residues include Lys225 and Asp229. NAD(+) is bound by residues Asn230, 259 to 264 (GFGDVG), Glu282, Asn317, 338 to 340 (IGH), and Asn383.

The protein belongs to the adenosylhomocysteinase family. NAD(+) is required as a cofactor.

The protein localises to the cytoplasm. The catalysed reaction is S-adenosyl-L-homocysteine + H2O = L-homocysteine + adenosine. It functions in the pathway amino-acid biosynthesis; L-homocysteine biosynthesis; L-homocysteine from S-adenosyl-L-homocysteine: step 1/1. In terms of biological role, may play a key role in the regulation of the intracellular concentration of adenosylhomocysteine. In Rhodopseudomonas palustris (strain ATCC BAA-98 / CGA009), this protein is Adenosylhomocysteinase.